A 317-amino-acid chain; its full sequence is MKSGGNTNTKLILVHPYIQKQTSTNRLWLLAFVSFFTIAFLLTLLYTTDSIISSKNNSATVSSAVNSAVTTATISQLPTTAINAMLHYASRSNDSYHMSYGEMKSISDVLRRCSPPCNLLVFGLTHETLLWKSLNHNGRTVFIEENRYYAAYFEEIHPEIEVFDVQYTTKAREARELVSAVKEAARNECRPVQNLLFSDCKLGLNDLPNHVYDVDWDVILVDGPRGDGGDVPGRMSSIFTAAVLARSKKGGNPKTHVFVHDYYRDVERLCGDEFLCRENLVESNDLLAHYVLEKMDKNSTQFCRGRKKKRSVSSPSA.

The helical transmembrane segment at 27–47 (LWLLAFVSFFTIAFLLTLLYT) threads the bilayer.

In terms of tissue distribution, expressed in roots, rosette leaves, stems and siliques. Expressed in the xylem.

Its subcellular location is the golgi apparatus membrane. Required for xylan biosynthesis, but not directly involved in catalyzing the addition of sugars to the growing polymer. This is Protein IRX15-LIKE (IRX15-L) from Arabidopsis thaliana (Mouse-ear cress).